The following is a 311-amino-acid chain: Protoheme IX farnesyltransferase (311 aa).

8 helical membrane passes run 39–59 (LLAM…PIGE), 61–81 (LPEI…AGAF), 111–131 (ALVL…VASP), 133–153 (AALF…MWSK), 162–182 (IGSV…SGDL), 187–207 (IIGL…AIAI), 246–266 (FFFV…SLIW), and 287–307 (FVFS…FSLL).

This sequence belongs to the UbiA prenyltransferase family. Protoheme IX farnesyltransferase subfamily. As to quaternary structure, interacts with CtaA.

It localises to the cell membrane. It carries out the reaction heme b + (2E,6E)-farnesyl diphosphate + H2O = Fe(II)-heme o + diphosphate. The protein operates within porphyrin-containing compound metabolism; heme O biosynthesis; heme O from protoheme: step 1/1. Its function is as follows. Converts heme B (protoheme IX) to heme O by substitution of the vinyl group on carbon 2 of heme B porphyrin ring with a hydroxyethyl farnesyl side group. This chain is Protoheme IX farnesyltransferase, found in Shouchella clausii (strain KSM-K16) (Alkalihalobacillus clausii).